The primary structure comprises 387 residues: Phosphoglycerate kinase (387 aa).

Residues 21 to 23 (DLN), Arg-36, 59 to 62 (HLGR), Arg-113, and Arg-146 each bind substrate. ATP contacts are provided by residues Lys-197, Glu-314, and 340 to 343 (GGDT).

This sequence belongs to the phosphoglycerate kinase family. Monomer.

It is found in the cytoplasm. It catalyses the reaction (2R)-3-phosphoglycerate + ATP = (2R)-3-phospho-glyceroyl phosphate + ADP. The protein operates within carbohydrate degradation; glycolysis; pyruvate from D-glyceraldehyde 3-phosphate: step 2/5. The polypeptide is Phosphoglycerate kinase (Pseudomonas entomophila (strain L48)).